We begin with the raw amino-acid sequence, 666 residues long: TATA box-binding protein-associated factor RNA polymerase I subunit B (666 aa).

Residues 1–29 (MICTECENDAFDEEDDGYYYCQRCGVQVE) form an RRN7-type zinc finger. The Zn(2+) site is built by Cys-3, Cys-6, Cys-21, and Cys-24. A B-reader region spans residues 30-64 (NLIQTGVDDGDLIGEGGGTQGALYNPKHRRTEPQP). Disordered stretches follow at residues 45-110 (GGGT…VDKE) and 189-208 (DSEHQSEDGEVKDAKRLKRH). The B-linker stretch occupies residues 65–80 (ITPSQPRFTDDTSRYS). The segment covering 78 to 89 (RYSQFKSQFESE) has biased composition (polar residues). Residues 81-285 (QFKSQFESEN…REQMGERSAA (205 aa)) are N-terminal cyclin fold. Composition is skewed to basic and acidic residues over residues 90-110 (NGNKELPREVKRAPDSYVDKE) and 189-202 (DSEHQSEDGEVKDA). The tract at residues 286–288 (CPV) is C-terminal cyclin fold. A disordered region spans residues 515 to 548 (SDGNNPCSSSSRRNESVSIGLDLSSSEHRESSSP). The span at 539-548 (SSEHRESSSP) shows a compositional bias: basic and acidic residues.

Belongs to the RRN7/TAF1B family. As to quaternary structure, interacts with TFIIF. Interacts with MEE14/CBP1, TBP1 and NRPB1 (via CTD). In terms of tissue distribution, expressed at high levels in seedlings, inflorescences and young siliques and at lower levels in roots. Not detected in leaves and stems. Detected in root tips and shoot apical meristems, in anthers, primarily in microspores with weaker expression in mature pollen grains and in the central cell of the mature female gametophyte. Not expressed in synergids, egg cells, antipodal cells, endosperm cells and fertilized egg cells.

It localises to the nucleus. Its subcellular location is the nucleolus. Its function is as follows. Component of RNA polymerase I core factor complex that acts as a GTF2B/TFIIB-like factor and plays a key role in multiple steps during transcription initiation such as pre-initiation complex (PIC) assembly and postpolymerase recruitment events in polymerase I (Pol I) transcription. Binds rDNA promoters and plays a role in Pol I recruitment. Required for the development of the one-cell zygote and endosperm in embryos. Required for micropylar pollen tube guidance, but has no effect on ovule development and gametophytic cell fate specification. May regulate the transcription of secreted cysteine-rich peptide (CRP) genes in the embryo sac. The chain is TATA box-binding protein-associated factor RNA polymerase I subunit B from Arabidopsis thaliana (Mouse-ear cress).